The following is a 65-amino-acid chain: DNA gyrase inhibitor YacG (65 aa).

Zn(2+) is bound by residues C9, C12, C28, and C32. A disordered region spans residues 43–65; the sequence is EEKRIPSQSENSDSDDWSGQPEQ.

This sequence belongs to the DNA gyrase inhibitor YacG family. As to quaternary structure, interacts with GyrB. Zn(2+) serves as cofactor.

Functionally, inhibits all the catalytic activities of DNA gyrase by preventing its interaction with DNA. Acts by binding directly to the C-terminal domain of GyrB, which probably disrupts DNA binding by the gyrase. This chain is DNA gyrase inhibitor YacG, found in Photorhabdus laumondii subsp. laumondii (strain DSM 15139 / CIP 105565 / TT01) (Photorhabdus luminescens subsp. laumondii).